The following is a 106-amino-acid chain: Transcription initiation factor IIA subunit 2 (106 aa).

Belongs to the TFIIA subunit 2 family. TFIIA is a heterodimer of the large unprocessed subunit 1 and a small subunit gamma. It was originally believed to be a heterotrimer of an alpha, a beta and a gamma subunit.

Its subcellular location is the nucleus. Functionally, TFIIA is a component of the transcription machinery of RNA polymerase II and plays an important role in transcriptional activation. TFIIA in a complex with TBP mediates transcriptional activity. In Arabidopsis thaliana (Mouse-ear cress), this protein is Transcription initiation factor IIA subunit 2 (TFIIA-S).